The primary structure comprises 160 residues: Cytochrome b6-f complex subunit 4 (160 aa).

3 helical membrane passes run 36 to 56, 95 to 115, and 131 to 151; these read LLYI…GLAV, LLGV…PFLE, and TVFL…TLPI.

It belongs to the cytochrome b family. PetD subfamily. As to quaternary structure, the 4 large subunits of the cytochrome b6-f complex are cytochrome b6, subunit IV (17 kDa polypeptide, petD), cytochrome f and the Rieske protein, while the 4 small subunits are petG, petL, petM and petN. The complex functions as a dimer.

It is found in the plastid. The protein localises to the chloroplast thylakoid membrane. In terms of biological role, component of the cytochrome b6-f complex, which mediates electron transfer between photosystem II (PSII) and photosystem I (PSI), cyclic electron flow around PSI, and state transitions. In Saccharum hybrid (Sugarcane), this protein is Cytochrome b6-f complex subunit 4.